A 556-amino-acid polypeptide reads, in one-letter code: MKSDIEIAQSVPLKPITEIVKKVGIDADDLELYGNYKAKLSFEKIKSVEDNKPGKLILVTAINPTPAGEGKSTMSIGLADALTKIGKKTMLALREPSLGPVMGIKGGAAGGGYAQVLPMEDINLHFTGDMHAITTAHNALSALIDNHLQQGNELGIDPRRIIWKRVLDLNDRSLRQVIVGLGSPVNGVPREDGFDITVASEVMAILCLATDLKDLKARLANIVIAYRYDKSPVYVRDLKVEGALALILKDAIKPNLVQTIYGTPAFVHGGPFANIAHGCNSVLATSTALRLADYTVTEAGFGADLGAEKFLNIKTPNLPKAPDAVVIVATLRALKMHGGVAKADLTFENTAAVRSGFANLKRHVENIRKFNIPIVVAINEFVTDTKAEIQVLKELCAEIAVPVELASVWAKGADGGIALANAVVKAITEESAAYKRLYADKDSLEEKLKAIVTEIYGGRAVQFGPKAKNQLKQFAQFGWDQLPVCMAKTQYSFSDDPSLLGAPDQFDITIRELVPKTGAGFIVALTGDVMTMPGLPKIPAAMKMDVTEDGTAVGLF.

65–72 lines the ATP pocket; that stretch reads TPAGEGKS.

The protein belongs to the formate--tetrahydrofolate ligase family.

The catalysed reaction is (6S)-5,6,7,8-tetrahydrofolate + formate + ATP = (6R)-10-formyltetrahydrofolate + ADP + phosphate. It participates in one-carbon metabolism; tetrahydrofolate interconversion. This Streptococcus equi subsp. equi (strain 4047) protein is Formate--tetrahydrofolate ligase.